The following is a 266-amino-acid chain: Manganese catalase (266 aa).

E35 contacts Mn(2+). Residues D57 and D61 each coordinate Ca(2+). Residues E66, H69, E148, and H181 each contribute to the Mn(2+) site. Residues N218, S220, and G222 each contribute to the Ca(2+) site. The segment at 243–266 (ENPEAMGGIPHIKPGDPRLHNHQG) is disordered. The span at 255–266 (KPGDPRLHNHQG) shows a compositional bias: basic and acidic residues.

It belongs to the manganese catalase family. Homohexamer. Ca(2+) serves as cofactor. It depends on Mn(2+) as a cofactor.

The enzyme catalyses 2 H2O2 = O2 + 2 H2O. In terms of biological role, catalyzes the decomposition of hydrogen peroxide into water and oxygen. This is Manganese catalase from Lactiplantibacillus plantarum (Lactobacillus plantarum).